The primary structure comprises 421 residues: Ribulose bisphosphate carboxylase large chain (421 aa).

Positions 68 and 118 each coordinate substrate. Lys-120 acts as the Proton acceptor in catalysis. Residue Lys-122 coordinates substrate. Positions 146, 148, and 149 each coordinate Mg(2+). Lys-146 bears the N6-carboxylysine mark. His-239 serves as the catalytic Proton acceptor. Substrate contacts are provided by Arg-240, His-272, and Ser-324.

It belongs to the RuBisCO large chain family. Type I subfamily. As to quaternary structure, heterohexadecamer of 8 large chains and 8 small chains; disulfide-linked. The disulfide link is formed within the large subunit homodimers. The cofactor is Mg(2+). In terms of processing, the disulfide bond which can form in the large chain dimeric partners within the hexadecamer appears to be associated with oxidative stress and protein turnover.

Its subcellular location is the plastid. It is found in the chloroplast. The catalysed reaction is 2 (2R)-3-phosphoglycerate + 2 H(+) = D-ribulose 1,5-bisphosphate + CO2 + H2O. The enzyme catalyses D-ribulose 1,5-bisphosphate + O2 = 2-phosphoglycolate + (2R)-3-phosphoglycerate + 2 H(+). Functionally, ruBisCO catalyzes two reactions: the carboxylation of D-ribulose 1,5-bisphosphate, the primary event in carbon dioxide fixation, as well as the oxidative fragmentation of the pentose substrate in the photorespiration process. Both reactions occur simultaneously and in competition at the same active site. The protein is Ribulose bisphosphate carboxylase large chain (rbcL) of Aegilops crassa (Persian goatgrass).